A 469-amino-acid chain; its full sequence is Mitochondrial adenyl nucleotide antiporter SLC25A25 (469 aa).

The interval 1-165 is regulatory N-terminal domain; it reads MLCLCLYVPV…LYWKHSTIFD (165 aa). Residues 1-189 lie on the Mitochondrial intermembrane side of the membrane; it reads MLCLCLYVPV…ERQTGMWWRH (189 aa). EF-hand domains follow at residues 47–80, 78–113, and 114–149; these read TYRQ…QDHE, DHEK…LGVK, and ISEQ…HPVE. Positions 60, 62, 64, 66, and 71 each coordinate Ca(2+). The tract at residues 151–160 is linker region; sequence IPEIILYWKH. The C-terminal transmembrane transporter domain stretch occupies residues 166–469; it reads VGENLTVPDE…LKITLGVQSR (304 aa). Solcar repeat units lie at residues 184–270, 278–363, and 375–463; these read GMWW…IKRL, LRIH…LKNA, and PGVF…LKIT. The helical transmembrane segment at 190-207 threads the bilayer; that stretch reads LVAGGGAGAVSRTCTAPL. Residues 208 to 244 lie on the Mitochondrial matrix side of the membrane; that stretch reads DRLKVLMQVHASRSNNMGIVGGFTQMIREGGARSLWR. A helical membrane pass occupies residues 245–264; it reads GNGINVLKIAPESAIKFMAY. Residues 265 to 287 lie on the Mitochondrial intermembrane side of the membrane; that stretch reads EQIKRLVGSDQETLRIHERLVAG. The helical transmembrane segment at 288–301 threads the bilayer; the sequence is SLAGAIAQSSIYPM. Residues 302 to 337 lie on the Mitochondrial matrix side of the membrane; it reads EVLKTRMALRKTGQYSGMLDCARRILAREGVAAFYK. The chain crosses the membrane as a helical span at residues 338 to 357; it reads GYVPNMLGIIPYAGIDLAVY. Over 358–380 the chain is Mitochondrial intermembrane; it reads ETLKNAWLQHYAVNSADPGVFVL. A helical membrane pass occupies residues 381 to 398; that stretch reads LACGTMSSTCGQLASYPL. Topologically, residues 399–437 are mitochondrial matrix; it reads ALVRTRMQAQASIEGAPEVTMSSLFKHILRTEGAFGLYR. Residues 438–457 traverse the membrane as a helical segment; the sequence is GLAPNFMKVIPAVSISYVVY. The Mitochondrial intermembrane segment spans residues 458 to 469; the sequence is ENLKITLGVQSR.

The protein belongs to the mitochondrial carrier (TC 2.A.29) family. As to expression, widely expressed. Expressed in fetal and adult liver, skeletal muscle, testis, ovary, hippocampus and caudate nucleus. In terms of tissue distribution, expressed in all tissues tested. Expression is restricted to kidney and lung.

The protein localises to the mitochondrion inner membrane. It carries out the reaction Mg(2+)(out) + phosphate(in) + ATP(out) = Mg(2+)(in) + phosphate(out) + ATP(in). Its activity is regulated as follows. Activated by an increase in cytosolic calcium levels that induce a conformational change of the N-terminal regulatory domain, uncapping the channel and allowing transport. In terms of biological role, electroneutral antiporter that most probably mediates the transport of adenyl nucleotides through the inner mitochondrial membrane. Originally identified as an ATP-magnesium/inorganic phosphate antiporter, it could have a broader specificity for adenyl nucleotides. By regulating the mitochondrial matrix adenyl nucleotide pool could adapt to changing cellular energetic demands and indirectly regulate adenyl nucleotide-dependent metabolic pathways. The sequence is that of Mitochondrial adenyl nucleotide antiporter SLC25A25 from Homo sapiens (Human).